The chain runs to 71 residues: ATP synthase subunit c (71 aa).

2 consecutive transmembrane segments (helical) span residues 4–24 and 47–67; these read IAAAIAIMGAAIGAGYGNGQV and FIGVALVEAVPILGVVIALIL.

The protein belongs to the ATPase C chain family. As to quaternary structure, F-type ATPases have 2 components, F(1) - the catalytic core - and F(0) - the membrane proton channel. F(1) has five subunits: alpha(3), beta(3), gamma(1), delta(1), epsilon(1). F(0) has three main subunits: a(1), b(2) and c(10-14). The alpha and beta chains form an alternating ring which encloses part of the gamma chain. F(1) is attached to F(0) by a central stalk formed by the gamma and epsilon chains, while a peripheral stalk is formed by the delta and b chains.

The protein localises to the cell membrane. In terms of biological role, f(1)F(0) ATP synthase produces ATP from ADP in the presence of a proton or sodium gradient. F-type ATPases consist of two structural domains, F(1) containing the extramembraneous catalytic core and F(0) containing the membrane proton channel, linked together by a central stalk and a peripheral stalk. During catalysis, ATP synthesis in the catalytic domain of F(1) is coupled via a rotary mechanism of the central stalk subunits to proton translocation. Its function is as follows. Key component of the F(0) channel; it plays a direct role in translocation across the membrane. A homomeric c-ring of between 10-14 subunits forms the central stalk rotor element with the F(1) delta and epsilon subunits. This is ATP synthase subunit c from Enterococcus hirae (strain ATCC 9790 / DSM 20160 / JCM 8729 / LMG 6399 / NBRC 3181 / NCIMB 6459 / NCDO 1258 / NCTC 12367 / WDCM 00089 / R).